Here is a 303-residue protein sequence, read N- to C-terminus: Ribonucleoside-diphosphate reductase small subunit (303 aa).

Positions 60, 90, and 93 each coordinate Fe cation. The active site involves Tyr97. A helical membrane pass occupies residues 147 to 167 (LLMILIEGIFFASSFASISYL). Positions 153, 187, and 190 each coordinate Fe cation.

This sequence belongs to the ribonucleoside diphosphate reductase small chain family. As to quaternary structure, heterotetramer composed of a homodimer of the large subunit (R1) and a homodimer of the small subunit (R2). Larger multisubunit protein complex are also active, composed of (R1)n(R2)n. It depends on Fe cation as a cofactor.

It is found in the host membrane. The enzyme catalyses a 2'-deoxyribonucleoside 5'-diphosphate + [thioredoxin]-disulfide + H2O = a ribonucleoside 5'-diphosphate + [thioredoxin]-dithiol. In terms of biological role, ribonucleoside-diphosphate reductase holoenzyme provides the precursors necessary for viral DNA synthesis. Allows virus growth in non-dividing cells, as well as reactivation from latency in infected hosts. Catalyzes the biosynthesis of deoxyribonucleotides from the corresponding ribonucleotides. In Suid herpesvirus 1 (strain Kaplan) (SuHV-1), this protein is Ribonucleoside-diphosphate reductase small subunit.